A 223-amino-acid chain; its full sequence is Uracil-DNA glycosylase (223 aa).

Asp-67 functions as the Proton acceptor in the catalytic mechanism.

It belongs to the uracil-DNA glycosylase (UDG) superfamily. UNG family.

The protein resides in the cytoplasm. It catalyses the reaction Hydrolyzes single-stranded DNA or mismatched double-stranded DNA and polynucleotides, releasing free uracil.. Excises uracil residues from the DNA which can arise as a result of misincorporation of dUMP residues by DNA polymerase or due to deamination of cytosine. In Borrelia duttonii (strain Ly), this protein is Uracil-DNA glycosylase.